The primary structure comprises 339 residues: Ribosomal RNA small subunit methyltransferase C (339 aa).

The protein belongs to the methyltransferase superfamily. RsmC family. Monomer.

It localises to the cytoplasm. The catalysed reaction is guanosine(1207) in 16S rRNA + S-adenosyl-L-methionine = N(2)-methylguanosine(1207) in 16S rRNA + S-adenosyl-L-homocysteine + H(+). In terms of biological role, specifically methylates the guanine in position 1207 of 16S rRNA in the 30S particle. This Aliivibrio fischeri (strain ATCC 700601 / ES114) (Vibrio fischeri) protein is Ribosomal RNA small subunit methyltransferase C.